The following is a 518-amino-acid chain: Bifunctional purine biosynthesis protein PurH (518 aa).

In terms of domain architecture, MGS-like spans 1–146; the sequence is MSPIALLSVS…KNHQDVLVVT (146 aa).

This sequence belongs to the PurH family.

It catalyses the reaction (6R)-10-formyltetrahydrofolate + 5-amino-1-(5-phospho-beta-D-ribosyl)imidazole-4-carboxamide = 5-formamido-1-(5-phospho-D-ribosyl)imidazole-4-carboxamide + (6S)-5,6,7,8-tetrahydrofolate. The catalysed reaction is IMP + H2O = 5-formamido-1-(5-phospho-D-ribosyl)imidazole-4-carboxamide. It participates in purine metabolism; IMP biosynthesis via de novo pathway; 5-formamido-1-(5-phospho-D-ribosyl)imidazole-4-carboxamide from 5-amino-1-(5-phospho-D-ribosyl)imidazole-4-carboxamide (10-formyl THF route): step 1/1. It functions in the pathway purine metabolism; IMP biosynthesis via de novo pathway; IMP from 5-formamido-1-(5-phospho-D-ribosyl)imidazole-4-carboxamide: step 1/1. The polypeptide is Bifunctional purine biosynthesis protein PurH (Prochlorococcus marinus (strain NATL2A)).